A 464-amino-acid chain; its full sequence is UDP-N-acetylmuramate--L-alanine ligase (464 aa).

123-129 (GTHGKTT) is an ATP binding site.

It belongs to the MurCDEF family.

The protein resides in the cytoplasm. It catalyses the reaction UDP-N-acetyl-alpha-D-muramate + L-alanine + ATP = UDP-N-acetyl-alpha-D-muramoyl-L-alanine + ADP + phosphate + H(+). It participates in cell wall biogenesis; peptidoglycan biosynthesis. Cell wall formation. The protein is UDP-N-acetylmuramate--L-alanine ligase of Carboxydothermus hydrogenoformans (strain ATCC BAA-161 / DSM 6008 / Z-2901).